A 62-amino-acid chain; its full sequence is Metallothionein-like protein 3A (62 aa).

The protein belongs to the metallothionein superfamily. Type 15 family.

Metallothioneins have a high content of cysteine residues that bind various heavy metals. The sequence is that of Metallothionein-like protein 3A (MT3A) from Oryza sativa subsp. indica (Rice).